A 463-amino-acid chain; its full sequence is FAD-dependent monooxygenase ausM (463 aa).

The FAD site is built by E40, G54, and R113. Y217 is an active-site residue. FAD is bound by residues D309 and A322. Residues 443-463 form a helical membrane-spanning segment; sequence VPWLVISLPVLASVLCYLMFA.

It belongs to the paxM FAD-dependent monooxygenase family. FAD is required as a cofactor.

It is found in the membrane. Its pathway is secondary metabolite biosynthesis; terpenoid biosynthesis. FAD-dependent monooxygenase; part of the gene cluster that mediates the biosynthesis of calidodehydroaustin, a fungal meroterpenoid. The first step of the pathway is the synthesis of 3,5-dimethylorsellinic acid by the polyketide synthase ausA. 3,5-dimethylorsellinic acid is then prenylated by the polyprenyl transferase ausN. Further epoxidation by the FAD-dependent monooxygenase ausM and cyclization by the probable terpene cyclase ausL lead to the formation of protoaustinoid A. Protoaustinoid A is then oxidized to spiro-lactone preaustinoid A3 by the combined action of the FAD-binding monooxygenases ausB and ausC, and the dioxygenase ausE. Acid-catalyzed keto-rearrangement and ring contraction of the tetraketide portion of preaustinoid A3 by ausJ lead to the formation of preaustinoid A4. The aldo-keto reductase ausK, with the help of ausH, is involved in the next step by transforming preaustinoid A4 into isoaustinone which is in turn hydroxylated by the P450 monooxygenase ausI to form austinolide. The cytochrome P450 monooxygenase ausG modifies austinolide to austinol. Austinol is further acetylated to austin by the O-acetyltransferase ausP, which spontaneously changes to dehydroaustin. The cytochrome P450 monooxygenase ausR then converts dehydroaustin is into 7-dehydrodehydroaustin. The hydroxylation catalyzed by ausR permits the O-acetyltransferase ausQ to add an additional acetyl group to the molecule, leading to the formation of acetoxydehydroaustin. The short chain dehydrogenase ausT catalyzes the reduction of the double bond present between carbon atoms 1 and 2 to convert 7-dehydrodehydroaustin into 1,2-dihydro-7-hydroxydehydroaustin. AusQ catalyzes not only an acetylation reaction but also the addition of the PKS ausV diketide product to 1,2-dihydro-7-hydroxydehydroaustin, forming precalidodehydroaustin. Finally, the iron/alpha-ketoglutarate-dependent dioxygenase converts precalidodehydroaustin into calidodehydroaustin. The polypeptide is FAD-dependent monooxygenase ausM (Aspergillus calidoustus).